A 297-amino-acid chain; its full sequence is Homoserine kinase (297 aa).

82 to 92 (PVSRGLGSSAA) is a binding site for ATP.

Belongs to the GHMP kinase family. Homoserine kinase subfamily.

The protein resides in the cytoplasm. The catalysed reaction is L-homoserine + ATP = O-phospho-L-homoserine + ADP + H(+). It functions in the pathway amino-acid biosynthesis; L-threonine biosynthesis; L-threonine from L-aspartate: step 4/5. Functionally, catalyzes the ATP-dependent phosphorylation of L-homoserine to L-homoserine phosphate. The chain is Homoserine kinase from Clostridium botulinum (strain Kyoto / Type A2).